The following is a 60-amino-acid chain: Ixodegrin-like peptide (60 aa).

An N-terminal signal peptide occupies residues 1–21 (MNAAFIAALLILGALTLDAMA). The Cell attachment site motif lies at 49 to 51 (RGD).

The protein belongs to the ixodegrin family. In terms of processing, contains 3 disulfide bonds. As to expression, expressed in salivary glands.

The protein localises to the secreted. Its function is as follows. Tick salivary platelet aggregation inhibitor that plays an important part in the anti-hemostatic strategy of ticks. Inhibits platelet aggregation induced by ADP, thrombin and thromboxane A2 (TXA2). Blocks platelet adhesion to soluble collagen (most probably through the binding to alpha-2/beta-1 integrin (ITGA2/ITGB1)) and binds to purified glycoprotein IIb/IIIa (ITGA2B/ITGB3) in a dose-dependent manner. In vivo, reduces thrombus weight effectively in a rat arteriovenous shunt model and inhibits thrombosis in a carrageenan-induced mouse tail thrombosis model. The protein is Ixodegrin-like peptide of Ixodes scapularis (Black-legged tick).